A 420-amino-acid chain; its full sequence is Phosphoribosylamine--glycine ligase (420 aa).

The ATP-grasp domain maps to 108–314; that stretch reads KQFMEKYAIP…FAALIAALLN (207 aa). 134-195 contributes to the ATP binding site; the sequence is LDERGVPIVI…EDFLAGEEFS (62 aa). 2 residues coordinate Mg(2+): Glu284 and Asn286.

It belongs to the GARS family. The cofactor is Mg(2+). Mn(2+) is required as a cofactor.

It carries out the reaction 5-phospho-beta-D-ribosylamine + glycine + ATP = N(1)-(5-phospho-beta-D-ribosyl)glycinamide + ADP + phosphate + H(+). The protein operates within purine metabolism; IMP biosynthesis via de novo pathway; N(1)-(5-phospho-D-ribosyl)glycinamide from 5-phospho-alpha-D-ribose 1-diphosphate: step 2/2. The protein is Phosphoribosylamine--glycine ligase of Listeria innocua serovar 6a (strain ATCC BAA-680 / CLIP 11262).